An 828-amino-acid polypeptide reads, in one-letter code: Leucine--tRNA ligase (828 aa).

Residues 42-52 (PYPSGTLHVGH) carry the 'HIGH' region motif. The 'KMSKS' region motif lies at 582–586 (KMSKS). Residue Lys585 participates in ATP binding.

Belongs to the class-I aminoacyl-tRNA synthetase family.

It localises to the cytoplasm. The catalysed reaction is tRNA(Leu) + L-leucine + ATP = L-leucyl-tRNA(Leu) + AMP + diphosphate. The protein is Leucine--tRNA ligase of Petrotoga mobilis (strain DSM 10674 / SJ95).